The primary structure comprises 301 residues: Ribosomal RNA small subunit methyltransferase A (301 aa).

S-adenosyl-L-methionine is bound by residues Asn23, Ile25, Gly50, Glu72, Asp97, and Asn149.

It belongs to the class I-like SAM-binding methyltransferase superfamily. rRNA adenine N(6)-methyltransferase family. RsmA subfamily.

It localises to the cytoplasm. The catalysed reaction is adenosine(1518)/adenosine(1519) in 16S rRNA + 4 S-adenosyl-L-methionine = N(6)-dimethyladenosine(1518)/N(6)-dimethyladenosine(1519) in 16S rRNA + 4 S-adenosyl-L-homocysteine + 4 H(+). In terms of biological role, specifically dimethylates two adjacent adenosines (A1518 and A1519) in the loop of a conserved hairpin near the 3'-end of 16S rRNA in the 30S particle. May play a critical role in biogenesis of 30S subunits. The polypeptide is Ribosomal RNA small subunit methyltransferase A (Rickettsia peacockii (strain Rustic)).